The following is a 340-amino-acid chain: Mitotic checkpoint protein BUB3.1 (340 aa).

The tract at residues 1 to 20 is disordered; it reads MTTVTPSAGRELSNPPSDGI. WD repeat units follow at residues 15–54, 96–135, 142–179, 239–278, and 281–324; these read PPSDGISNLRFSNNSDHLLVSSWDKRVRLYDVSTNSLKGE, THDKAVRCVEYSYAAGQVITGSWDKTVKCWDPRGASGPER, LQPERVYSMSLVGHRLVVATAGRHVNIYDLRNMSQPEQ, DIVYPVNSIAFHPIYGTFATGGCDGFVNIWDGNNKKRLYQ, and KYPT…RSVN.

Belongs to the WD repeat BUB3 family. Part of the mitotic checkpoint complex (MCC); interacts with CDC20-1 and CDC20-2. Interacts with MAD2 and BUBR1. In terms of tissue distribution, expressed in actively dividing tissues, early in organ development, in young leaves, lateral root primordia and root meristems, flower buds, flowers and siliques.

It localises to the nucleus. Its subcellular location is the chromosome. The protein resides in the centromere. The protein localises to the kinetochore. It is found in the cytoplasm. It localises to the cytoskeleton. Its subcellular location is the phragmoplast. The protein resides in the spindle. Its function is as follows. Has a dual function in spindle-assembly checkpoint signaling and in promoting the establishment of correct kinetochore-microtubule (K-MT) attachments. Promotes the formation of stable end-on bipolar attachments. Necessary for kinetochore localization of BUB1. The BUB1/BUB3 complex plays a role in the inhibition of anaphase-promoting complex or cyclosome (APC/C) when spindle-assembly checkpoint is activated and inhibits the ubiquitin ligase activity of APC/C by phosphorylating its activator CDC20. Essential for gametophyte development. The protein is Mitotic checkpoint protein BUB3.1 (BUB3.1) of Arabidopsis thaliana (Mouse-ear cress).